Consider the following 258-residue polypeptide: Small ribosomal subunit protein mS23 (258 aa).

The protein belongs to the mitochondrion-specific ribosomal protein mS23 family. As to quaternary structure, component of the mitochondrial small ribosomal subunit.

The protein resides in the mitochondrion. The chain is Small ribosomal subunit protein mS23 (rsm25) from Aspergillus fumigatus (strain ATCC MYA-4609 / CBS 101355 / FGSC A1100 / Af293) (Neosartorya fumigata).